A 76-amino-acid polypeptide reads, in one-letter code: MALPKIEDARKLSDEELAEEIAATKRKLFDLRFQQATRRLEKPHEFKHTKHRLGQLMTVEREREIAQTEIAVNSEQ.

This sequence belongs to the universal ribosomal protein uL29 family.

This chain is Large ribosomal subunit protein uL29, found in Gloeothece citriformis (strain PCC 7424) (Cyanothece sp. (strain PCC 7424)).